A 168-amino-acid chain; its full sequence is Thiosulfate dehydrogenase [quinone] small subunit (168 aa).

The chain crosses the membrane as a helical span at residues 6–26 (IIGIIFAILVVGWILATGQWA).

Heterodimer of a large and a small subunit in a 2:2 stoichiometry. TQO may associate with the terminal oxidase formed by doxBCE. In terms of processing, the N-terminus is blocked. Post-translationally, glycosylated.

The protein resides in the cell membrane. The enzyme catalyses 6-decylubiquinone + 2 thiosulfate = 6-decylubiquinol + tetrathionate. With respect to regulation, inhibited by sulfite, metabisulfite and dithonite. Functionally, TQO plays a role in sulfur oxidation and is proposed to couple sulfur oxidation to dioxygen reduction; caldariellaquinone or sulfolobus quinone seem to serve to transfer electrons to the electron transport chain terminal oxidase formed by DoxBCE. In Acidianus ambivalens (Desulfurolobus ambivalens), this protein is Thiosulfate dehydrogenase [quinone] small subunit (doxA).